The primary structure comprises 381 residues: tRNA-specific 2-thiouridylase MnmA (381 aa).

Residues 9 to 16 (GMSGGVDS) and methionine 35 contribute to the ATP site. Residues 95 to 97 (NPD) are interaction with target base in tRNA. The active-site Nucleophile is cysteine 100. A disulfide bridge connects residues cysteine 100 and cysteine 196. Glycine 124 lines the ATP pocket. An interaction with tRNA region spans residues 146–148 (KDQ). Catalysis depends on cysteine 196, which acts as the Cysteine persulfide intermediate. The interaction with tRNA stretch occupies residues 308-309 (RY).

It belongs to the MnmA/TRMU family.

The protein localises to the cytoplasm. It carries out the reaction S-sulfanyl-L-cysteinyl-[protein] + uridine(34) in tRNA + AH2 + ATP = 2-thiouridine(34) in tRNA + L-cysteinyl-[protein] + A + AMP + diphosphate + H(+). Functionally, catalyzes the 2-thiolation of uridine at the wobble position (U34) of tRNA, leading to the formation of s(2)U34. The polypeptide is tRNA-specific 2-thiouridylase MnmA (Burkholderia multivorans (strain ATCC 17616 / 249)).